The chain runs to 206 residues: Ribosomal RNA small subunit methyltransferase G (206 aa).

S-adenosyl-L-methionine contacts are provided by residues Gly73, Leu78, 124–125 (VE), and Arg139.

This sequence belongs to the methyltransferase superfamily. RNA methyltransferase RsmG family.

The protein resides in the cytoplasm. It carries out the reaction guanosine(527) in 16S rRNA + S-adenosyl-L-methionine = N(7)-methylguanosine(527) in 16S rRNA + S-adenosyl-L-homocysteine. In terms of biological role, specifically methylates the N7 position of guanine in position 527 of 16S rRNA. This Photobacterium profundum (strain SS9) protein is Ribosomal RNA small subunit methyltransferase G.